Here is a 126-residue protein sequence, read N- to C-terminus: Holo-[acyl-carrier-protein] synthase (126 aa).

Mg(2+) is bound by residues Asp9 and Glu58.

It belongs to the P-Pant transferase superfamily. AcpS family. Mg(2+) is required as a cofactor.

The protein localises to the cytoplasm. The enzyme catalyses apo-[ACP] + CoA = holo-[ACP] + adenosine 3',5'-bisphosphate + H(+). Transfers the 4'-phosphopantetheine moiety from coenzyme A to a Ser of acyl-carrier-protein. This chain is Holo-[acyl-carrier-protein] synthase, found in Escherichia coli O127:H6 (strain E2348/69 / EPEC).